A 319-amino-acid polypeptide reads, in one-letter code: L-galactose dehydrogenase (319 aa).

The active-site Proton donor is Tyr-59. One can recognise an SIS domain in the interval His-122–Val-269. His-124 provides a ligand contact to substrate.

The protein belongs to the aldo/keto reductase family.

It carries out the reaction L-galactose + NAD(+) = L-galactono-1,4-lactone + NADH + H(+). In terms of biological role, catalyzes the oxidation of L-galactose to L-galactono-1,4-lactone in the presence of NAD(+). Uses NAD(+) as a hydrogen acceptor much more efficiently than NADP(+). The sequence is that of L-galactose dehydrogenase (LGALDH) from Arabidopsis thaliana (Mouse-ear cress).